Consider the following 502-residue polypeptide: Serine/threonine-protein kinase SKS1 (502 aa).

Residues 10–338 (FRITAQIGSG…SEVSSLTSFT (329 aa)) enclose the Protein kinase domain. ATP-binding positions include 16–24 (IGSGAYGLV) and Lys39. Residue Asp186 is the Proton acceptor of the active site. 2 stretches are compositionally biased toward low complexity: residues 376 to 391 (QEQQ…QVQE) and 399 to 410 (EQIQNQEQAQQQ). A disordered region spans residues 376–439 (QEQQQQQQQQ…GSMEKYEYTN (64 aa)). Residues 411–420 (QEEEDAEPES) are compositionally biased toward acidic residues.

The protein belongs to the protein kinase superfamily. Ser/Thr protein kinase family.

It carries out the reaction L-seryl-[protein] + ATP = O-phospho-L-seryl-[protein] + ADP + H(+). The enzyme catalyses L-threonyl-[protein] + ATP = O-phospho-L-threonyl-[protein] + ADP + H(+). Functionally, may have a role in glucose regulation. The sequence is that of Serine/threonine-protein kinase SKS1 (SKS1) from Saccharomyces cerevisiae (strain ATCC 204508 / S288c) (Baker's yeast).